The primary structure comprises 145 residues: D-aminoacyl-tRNA deacylase (145 aa).

The Gly-cisPro motif, important for rejection of L-amino acids signature appears at 137-138 (GP).

Belongs to the DTD family. Homodimer.

It is found in the cytoplasm. The catalysed reaction is glycyl-tRNA(Ala) + H2O = tRNA(Ala) + glycine + H(+). The enzyme catalyses a D-aminoacyl-tRNA + H2O = a tRNA + a D-alpha-amino acid + H(+). An aminoacyl-tRNA editing enzyme that deacylates mischarged D-aminoacyl-tRNAs. Also deacylates mischarged glycyl-tRNA(Ala), protecting cells against glycine mischarging by AlaRS. Acts via tRNA-based rather than protein-based catalysis; rejects L-amino acids rather than detecting D-amino acids in the active site. By recycling D-aminoacyl-tRNA to D-amino acids and free tRNA molecules, this enzyme counteracts the toxicity associated with the formation of D-aminoacyl-tRNA entities in vivo and helps enforce protein L-homochirality. This Rhodococcus opacus (strain B4) protein is D-aminoacyl-tRNA deacylase.